Here is a 301-residue protein sequence, read N- to C-terminus: MTTKHDVKTFQGFIMTLQEYWAQQGCAIVQPLDMEVGAGTFHPMTFLRSLGPEPMSSAYVQPSRRPTDGRYGENPNRLQHYYQFQVVLKPSPSNMQELYLGSLEALGVDMNVHDVRFVEDNWESPTLGAWGLGWEIWLNGMEVSQFTYFQQVGGLECKPVTGEITYGLERLAMYIQEVDSVYDLVWTDGPLGKVMYGDIFHQNEVEQSTYNFEHADVDVQFKMFDDCEQACQRLLALEKPLPLPAYEQVMKASHAFNLLDARHAISVTERQRYILRVRTMAKGVAEAYYQAREALGFPMCK.

It belongs to the class-II aminoacyl-tRNA synthetase family. As to quaternary structure, tetramer of two alpha and two beta subunits.

The protein localises to the cytoplasm. The enzyme catalyses tRNA(Gly) + glycine + ATP = glycyl-tRNA(Gly) + AMP + diphosphate. The protein is Glycine--tRNA ligase alpha subunit of Shewanella halifaxensis (strain HAW-EB4).